We begin with the raw amino-acid sequence, 322 residues long: Alanine dehydrogenase (322 aa).

Lys-65 serves as the catalytic Proton donor/acceptor. NAD(+) contacts are provided by residues Arg-108, 135 to 136 (TQ), 157 to 159 (DVR), 217 to 219 (GAD), Lys-223, and Ser-290.

Belongs to the ornithine cyclodeaminase/mu-crystallin family. Archaeal alanine dehydrogenase subfamily. As to quaternary structure, homodimer.

The enzyme catalyses L-alanine + NAD(+) + H2O = pyruvate + NH4(+) + NADH + H(+). Catalyzes the NAD(+)-dependent oxidative deamination of L-alanine to pyruvate, and the reverse reaction, the reductive amination of pyruvate. Its physiological role is not known. Cannot use NADP(+) instead of NAD(+) as a cosubstrate. In the deamination direction, can also efficiently use L-2-aminobutyrate as substrate. In the reductive amination direction, also exhibits high activity with 2-oxobutyrate and oxaloacetate as substrate. In contrast to bacterial homologs, does not exhibit any ornithine cyclodeaminase activity. This Archaeoglobus fulgidus (strain ATCC 49558 / DSM 4304 / JCM 9628 / NBRC 100126 / VC-16) protein is Alanine dehydrogenase.